The sequence spans 787 residues: Serine/threonine-protein kinase SCH9 (787 aa).

Disordered regions lie at residues Met1–Thr82, Pro132–Gln172, and Ser238–Gln280. The span at Pro132–Gln155 shows a compositional bias: low complexity. Composition is skewed to polar residues over residues Asn156–Gln172 and Pro239–Gly263. One can recognise a C2 domain in the interval Asp182–Leu354. In terms of domain architecture, Protein kinase spans Phe392–Phe653. ATP is bound by residues Leu398 to Val406 and Lys421. Asp518 (proton acceptor) is an active-site residue. An AGC-kinase C-terminal domain is found at Ala654–Phe729.

Belongs to the protein kinase superfamily. AGC Ser/Thr protein kinase family. cAMP subfamily.

The catalysed reaction is L-seryl-[protein] + ATP = O-phospho-L-seryl-[protein] + ADP + H(+). It catalyses the reaction L-threonyl-[protein] + ATP = O-phospho-L-threonyl-[protein] + ADP + H(+). In terms of biological role, protein kinase that is part of growth control pathway which is at least partially redundant with the cAMP pathway. Plays a role in filamentous growth and virulence. Prevents hypha formation specifically under hypoxia at high CO(2) levels. Required for chlamydospore formation, distinctive morphological feature of the fungal pathogen C.albicans that can be induced to form in oxygen-limited environments and has been reported in clinical specimens. The protein is Serine/threonine-protein kinase SCH9 (SCH9) of Candida albicans (strain SC5314 / ATCC MYA-2876) (Yeast).